We begin with the raw amino-acid sequence, 183 residues long: Glutathione-regulated potassium-efflux system ancillary protein KefG (183 aa).

It belongs to the NAD(P)H dehydrogenase (quinone) family. KefG subfamily. As to quaternary structure, interacts with KefB.

Its subcellular location is the cell inner membrane. The enzyme catalyses a quinone + NADH + H(+) = a quinol + NAD(+). The catalysed reaction is a quinone + NADPH + H(+) = a quinol + NADP(+). In terms of biological role, regulatory subunit of a potassium efflux system that confers protection against electrophiles. Required for full activity of KefB. The protein is Glutathione-regulated potassium-efflux system ancillary protein KefG of Salmonella gallinarum (strain 287/91 / NCTC 13346).